The chain runs to 594 residues: Zinc finger protein 703 (594 aa).

A compositionally biased stretch (polar residues) spans 1–14 (MSDSPAGSNPRTPE). 3 disordered regions span residues 1–37 (MSDS…VPAV), 100–298 (TCSQ…GHVA), and 345–370 (LVGG…LTGA). Residue S2 is modified to N-acetylserine. Over residues 17-30 (GSGGGSSSGGGGGK) the composition is skewed to gly residues. Low complexity-rich tracts occupy residues 134-145 (RSAPGAASAAAA), 177-191 (GSSS…SSSS), and 212-225 (GASV…SSPG). Basic and acidic residues predominate over residues 246 to 256 (ELDKKEQEAKP). S257 is modified (phosphoserine). Gly residues predominate over residues 345–356 (LVGGQLSGGLGL). The segment at 460–488 (HSCNWVAASGPCDKRFATSEELLSHLRTH) adopts a C2H2-type zinc-finger fold. An Omega-N-methylarginine modification is found at R584.

This sequence belongs to the Elbow/Noc family. In terms of assembly, interacts with DCAF7 and PHB2. Interacts with TLE4; increases transcriptional repression. Expressed in mammary epithelium.

It localises to the nucleus. The protein resides in the cytoplasm. Functionally, transcriptional corepressor which does not bind directly to DNA and may regulate transcription through recruitment of histone deacetylases to gene promoters. Regulates cell adhesion, migration and proliferation. May be required for segmental gene expression during hindbrain development. The sequence is that of Zinc finger protein 703 (Znf703) from Mus musculus (Mouse).